The primary structure comprises 429 residues: Trigger factor (429 aa).

The PPIase FKBP-type domain maps to 161–246 (GDRLSIDFKG…INEVALPKEP (86 aa)).

This sequence belongs to the FKBP-type PPIase family. Tig subfamily.

Its subcellular location is the cytoplasm. The enzyme catalyses [protein]-peptidylproline (omega=180) = [protein]-peptidylproline (omega=0). Involved in protein export. Acts as a chaperone by maintaining the newly synthesized protein in an open conformation. Functions as a peptidyl-prolyl cis-trans isomerase. The sequence is that of Trigger factor from Ruthia magnifica subsp. Calyptogena magnifica.